We begin with the raw amino-acid sequence, 561 residues long: MDFKNEVVDLVSSQVDLPKEKITALIERPKNAKMGDYAFPAFILAKTMHKNPAIIAKDIAENLNSDNFANIQAVGPYVNFAIDHEKLIASTLKDVLAEKEHYGDQKLGEGNVPIDMSSPNIAKPMSMGHLRSTVIGNSIAKTMKKVGYTPIKINYLGDYGTQFGKLIAAYKHWGNEEDVKKDPIMSLFHYYVKFHKEAENNPELDNEGREWFKKLEDGDPEAVELWKWFREVSLKDFKRIYKELGVTFDSYNGEAFFNDKMQPVIDELKDKGLLHESRGAQVVDMGEDENPAIIVKSDGTSIYLTRDLAAAEWRMKEYNFVKMLYVVGNEQAQHFVELKTVLKKMGYDWADEIHHVPFGLITQGGKKLSTRKGNVVFLDQVLRDAVNLAKKQIQEKNPDLADQDQVAHDVGVGAVVFHDLKNDRLDNFDFDLDEVVRFEGDTGPYVQYTNARAQSVLRKAAAMGEKPSEGDFNINDDWAFAVAKDLADFPRIVARSAEKFEPSVIAKFALDLAKKFNKYYANVKILTKDDQIGARLALVQATSIVLTESLRLLGVNAPKEM.

Residues 119-129 (PNIAKPMSMGH) carry the 'HIGH' region motif.

It belongs to the class-I aminoacyl-tRNA synthetase family. In terms of assembly, monomer.

It is found in the cytoplasm. It carries out the reaction tRNA(Arg) + L-arginine + ATP = L-arginyl-tRNA(Arg) + AMP + diphosphate. This Lactobacillus acidophilus (strain ATCC 700396 / NCK56 / N2 / NCFM) protein is Arginine--tRNA ligase.